We begin with the raw amino-acid sequence, 569 residues long: Urease subunit alpha (569 aa).

A Urease domain is found at 131–569 (GGIDTHIHFI…LPLAQRYLLL (439 aa)). Residues histidine 136, histidine 138, and lysine 219 each contribute to the Ni(2+) site. Lysine 219 carries the N6-carboxylysine modification. Position 221 (histidine 221) interacts with substrate. The Ni(2+) site is built by histidine 248 and histidine 274. Histidine 322 serves as the catalytic Proton donor. Aspartate 362 lines the Ni(2+) pocket.

It belongs to the metallo-dependent hydrolases superfamily. Urease alpha subunit family. As to quaternary structure, heterotrimer of UreA (gamma), UreB (beta) and UreC (alpha) subunits. Three heterotrimers associate to form the active enzyme. It depends on Ni cation as a cofactor. Post-translationally, carboxylation allows a single lysine to coordinate two nickel ions.

Its subcellular location is the cytoplasm. The enzyme catalyses urea + 2 H2O + H(+) = hydrogencarbonate + 2 NH4(+). It participates in nitrogen metabolism; urea degradation; CO(2) and NH(3) from urea (urease route): step 1/1. The sequence is that of Urease subunit alpha from Parasynechococcus marenigrum (strain WH8102).